Here is a 340-residue protein sequence, read N- to C-terminus: Eukaryotic translation initiation factor 3 subunit I (340 aa).

5 WD repeats span residues 8–47 (GHER…RLGT), 50–91 (GHQG…KVWD), 150–189 (CTES…QLEN), 194–233 (EFDH…ILKT), and 291–330 (GHFG…FDFM).

This sequence belongs to the eIF-3 subunit I family. As to quaternary structure, component of the eukaryotic translation initiation factor 3 (eIF-3) complex.

It localises to the cytoplasm. Its function is as follows. Component of the eukaryotic translation initiation factor 3 (eIF-3) complex, which is involved in protein synthesis of a specialized repertoire of mRNAs and, together with other initiation factors, stimulates binding of mRNA and methionyl-tRNAi to the 40S ribosome. The eIF-3 complex specifically targets and initiates translation of a subset of mRNAs involved in cell proliferation. This chain is Eukaryotic translation initiation factor 3 subunit I (tif34), found in Neosartorya fischeri (strain ATCC 1020 / DSM 3700 / CBS 544.65 / FGSC A1164 / JCM 1740 / NRRL 181 / WB 181) (Aspergillus fischerianus).